We begin with the raw amino-acid sequence, 200 residues long: Bombinin-like peptides 3 (200 aa).

Residues 1–16 constitute a signal peptide (or 18); that stretch reads MNFKYIVAVSILIASA. 2 positions are modified to phenylalanine amide: F68 and F129.

It belongs to the bombinin family. Expressed by the skin glands.

The protein resides in the secreted. Its function is as follows. Has antimicrobial activity, but no hemolytic activity. Preference on killing Gram-negative non-enteric bacteria. This Bombina orientalis (Oriental fire-bellied toad) protein is Bombinin-like peptides 3.